Consider the following 454-residue polypeptide: tRNA modification GTPase MnmE (454 aa).

Residues R23, E80, and K120 each contribute to the (6S)-5-formyl-5,6,7,8-tetrahydrofolate site. Residues 216-377 (GMKVVIAGRP…LRNHLKQSMG (162 aa)) form the TrmE-type G domain. N226 contributes to the K(+) binding site. GTP-binding positions include 226–231 (NAGKSS), 245–251 (TDIAGTT), 270–273 (DTAG), 335–338 (NKAD), and 358–360 (SAR). S230 is a binding site for Mg(2+). K(+)-binding residues include T245, I247, and T250. Residue T251 participates in Mg(2+) binding. Position 454 (K454) interacts with (6S)-5-formyl-5,6,7,8-tetrahydrofolate.

The protein belongs to the TRAFAC class TrmE-Era-EngA-EngB-Septin-like GTPase superfamily. TrmE GTPase family. As to quaternary structure, homodimer. Heterotetramer of two MnmE and two MnmG subunits. K(+) serves as cofactor.

The protein localises to the cytoplasm. Its function is as follows. Exhibits a very high intrinsic GTPase hydrolysis rate. Involved in the addition of a carboxymethylaminomethyl (cmnm) group at the wobble position (U34) of certain tRNAs, forming tRNA-cmnm(5)s(2)U34. In Shigella sonnei (strain Ss046), this protein is tRNA modification GTPase MnmE.